Reading from the N-terminus, the 576-residue chain is Chaperonin CPN60-2, mitochondrial (576 aa).

The N-terminal 34 residues, 1-34 (MYRAAASLASKARQAGSSSAARQVGSRLAWSRNY), are a transit peptide targeting the mitochondrion.

The protein belongs to the chaperonin (HSP60) family.

It is found in the mitochondrion. Its function is as follows. Implicated in mitochondrial protein import and macromolecular assembly. May facilitate the correct folding of imported proteins. May also prevent misfolding and promote the refolding and proper assembly of unfolded polypeptides generated under stress conditions in the mitochondrial matrix. The sequence is that of Chaperonin CPN60-2, mitochondrial (CPN60II) from Zea mays (Maize).